A 93-amino-acid chain; its full sequence is Cell division topological specificity factor (93 aa).

It belongs to the MinE family.

Functionally, prevents the cell division inhibition by proteins MinC and MinD at internal division sites while permitting inhibition at polar sites. This ensures cell division at the proper site by restricting the formation of a division septum at the midpoint of the long axis of the cell. The protein is Cell division topological specificity factor of Methylococcus capsulatus (strain ATCC 33009 / NCIMB 11132 / Bath).